Consider the following 458-residue polypeptide: UDP-N-acetylglucosamine 1-carboxyvinyltransferase (458 aa).

22-23 lines the phosphoenolpyruvate pocket; that stretch reads KN. Arg94 serves as a coordination point for UDP-N-acetyl-alpha-D-glucosamine. Catalysis depends on Asp119, which acts as the Proton donor. Residues Asp309 and Val331 each coordinate UDP-N-acetyl-alpha-D-glucosamine.

The protein belongs to the EPSP synthase family. MurA subfamily.

It localises to the cytoplasm. The catalysed reaction is phosphoenolpyruvate + UDP-N-acetyl-alpha-D-glucosamine = UDP-N-acetyl-3-O-(1-carboxyvinyl)-alpha-D-glucosamine + phosphate. Its pathway is cell wall biogenesis; peptidoglycan biosynthesis. Cell wall formation. Adds enolpyruvyl to UDP-N-acetylglucosamine. The sequence is that of UDP-N-acetylglucosamine 1-carboxyvinyltransferase from Chlamydia pneumoniae (Chlamydophila pneumoniae).